The primary structure comprises 525 residues: PE-PGRS family protein PE_PGRS47 (525 aa).

Residues 1 to 93 (MSFVIAAPEF…AYSYASAEAA (93 aa)) form the PE domain. Residues 506–525 (VGGAGGLLEGQNGENGLLPS) form a disordered region. Residues 514-525 (EGQNGENGLLPS) are compositionally biased toward low complexity.

It belongs to the mycobacterial PE family. PGRS subfamily.

It localises to the secreted. The protein localises to the cell surface. It is found in the host cytoplasm. The protein resides in the host cytosol. Its function is as follows. Contributes to evasion of both innate and adaptive immunity. Inhibits autophagy in infected host phagocytes and inhibits major histocompatibility complex (MHC) class II antigen presentation by mycobacteria-infected dendritic cells. Has an important role in the growth and survival of M.tuberculosis, particularly during intracellular growth and in the later chronic phase of infection. The protein is PE-PGRS family protein PE_PGRS47 of Mycobacterium tuberculosis (strain ATCC 25618 / H37Rv).